We begin with the raw amino-acid sequence, 86 residues long: Small ribosomal subunit protein uS17 (86 aa).

It belongs to the universal ribosomal protein uS17 family. As to quaternary structure, part of the 30S ribosomal subunit.

One of the primary rRNA binding proteins, it binds specifically to the 5'-end of 16S ribosomal RNA. The sequence is that of Small ribosomal subunit protein uS17 from Streptococcus mutans serotype c (strain ATCC 700610 / UA159).